The following is a 469-amino-acid chain: Acetyl-CoA decarbonylase/synthase complex subunit beta 1 (469 aa).

[Ni-Fe-S] cluster-binding residues include C189, C192, C278, and C280.

This sequence belongs to the CdhC family. In terms of assembly, monomer. The ACDS complex is made up of alpha, epsilon, beta, gamma and delta chains with a probable stoichiometry of (alpha(2)epsilon(2))(4)-beta(8)-(gamma(1)delta(1))(8) (Potential). [Ni-Fe-S] cluster is required as a cofactor.

The catalysed reaction is Co(I)-[corrinoid Fe-S protein] + acetyl-CoA + H(+) = methyl-Co(III)-[corrinoid Fe-S protein] + CO + CoA. The protein operates within one-carbon metabolism; methanogenesis from acetate. Part of a complex that catalyzes the reversible cleavage of acetyl-CoA, allowing growth on acetate as sole source of carbon and energy. The alpha-epsilon complex generates CO from CO(2), while the beta subunit (this protein) combines the CO with CoA and a methyl group to form acetyl-CoA. The methyl group, which is incorporated into acetyl-CoA, is transferred to the beta subunit by a corrinoid iron-sulfur protein (the gamma-delta complex). In Methanosarcina mazei (strain ATCC BAA-159 / DSM 3647 / Goe1 / Go1 / JCM 11833 / OCM 88) (Methanosarcina frisia), this protein is Acetyl-CoA decarbonylase/synthase complex subunit beta 1 (cdhC1).